A 162-amino-acid polypeptide reads, in one-letter code: Protein-export protein SecB (162 aa).

The protein belongs to the SecB family. In terms of assembly, homotetramer, a dimer of dimers. One homotetramer interacts with 1 SecA dimer.

The protein resides in the cytoplasm. Its function is as follows. One of the proteins required for the normal export of preproteins out of the cell cytoplasm. It is a molecular chaperone that binds to a subset of precursor proteins, maintaining them in a translocation-competent state. It also specifically binds to its receptor SecA. This Legionella pneumophila subsp. pneumophila (strain Philadelphia 1 / ATCC 33152 / DSM 7513) protein is Protein-export protein SecB.